Consider the following 265-residue polypeptide: 5'-nucleotidase SurE (265 aa).

Residues D8, D9, S40, and N98 each contribute to the a divalent metal cation site.

This sequence belongs to the SurE nucleotidase family. A divalent metal cation is required as a cofactor.

The protein localises to the cytoplasm. The enzyme catalyses a ribonucleoside 5'-phosphate + H2O = a ribonucleoside + phosphate. Nucleotidase that shows phosphatase activity on nucleoside 5'-monophosphates. The polypeptide is 5'-nucleotidase SurE (Thermosynechococcus vestitus (strain NIES-2133 / IAM M-273 / BP-1)).